A 94-amino-acid polypeptide reads, in one-letter code: Putative pterin-4-alpha-carbinolamine dehydratase (94 aa).

This sequence belongs to the pterin-4-alpha-carbinolamine dehydratase family.

It catalyses the reaction (4aS,6R)-4a-hydroxy-L-erythro-5,6,7,8-tetrahydrobiopterin = (6R)-L-erythro-6,7-dihydrobiopterin + H2O. The sequence is that of Putative pterin-4-alpha-carbinolamine dehydratase from Koribacter versatilis (strain Ellin345).